The following is a 567-amino-acid chain: Hexose transporter HXT15 (567 aa).

A compositionally biased stretch (polar residues) spans 1–19 (MASEQSSPEINADNLNSSA). Positions 1–32 (MASEQSSPEINADNLNSSAADVHVQPPGEKEW) are disordered. The Cytoplasmic portion of the chain corresponds to 1 to 55 (MASEQSSPEINADNLNSSAADVHVQPPGEKEWSDGFYDKEVINGNTPDAPKRGFL). The helical transmembrane segment at 56-76 (GYLIIYLLCYPVSFGGFLPGW) threads the bilayer. Topologically, residues 77–112 (DSGITAGFINMDNFKMNFGSYKHSTGEYYLSNVRMG) are extracellular. A helical membrane pass occupies residues 113–133 (LLVAMFSVGCSIGGVAFARLA). The Cytoplasmic portion of the chain corresponds to 134-139 (DTLGRR). Residues 140-160 (LAIVIVVLVYMVGAIIQISSN) traverse the membrane as a helical segment. Topologically, residues 161–170 (HKWYQYFVGK) are extracellular. The helical transmembrane segment at 171–191 (IIYGLGAGGCSVLCPMLLSEI) threads the bilayer. Residues 192–197 (APTDLR) lie on the Cytoplasmic side of the membrane. The chain crosses the membrane as a helical span at residues 198-218 (GGLVSLYQLNMTFGIFLGYCS). Over 219–232 (VYGTRKYSNTAQWR) the chain is Extracellular. The chain crosses the membrane as a helical span at residues 233–253 (IPVGLCFLWALIIIVGMLLVP). Topologically, residues 254–336 (ESPRYLIECE…VQTFLQLTGE (83 aa)) are cytoplasmic. The helical transmembrane segment at 337–353 (NYFFFYGTTIFKSVGLT) threads the bilayer. The Extracellular portion of the chain corresponds to 354-359 (DGFETS). The chain crosses the membrane as a helical span at residues 360–377 (IVLGTVNFFSTIIAVMVV). Residues 378–384 (DKIGRRK) lie on the Cytoplasmic side of the membrane. The chain crosses the membrane as a helical span at residues 385 to 405 (CLLFGAASMMACMVIFASIGV). Over 406–427 (KCLYPHGQDGPSSKGAGNAMIV) the chain is Extracellular. Residues 428 to 448 (FTCFYIFCFATTWAPVAYIVV) form a helical membrane-spanning segment. At 449–465 (AESFPSKVKSKAMSIST) the chain is on the cytoplasmic side. The helical transmembrane segment at 466-486 (AFNWLWQFLIGFFTPFITGSI) threads the bilayer. Position 487 (H487) is a topological domain, extracellular. The helical transmembrane segment at 488–508 (FYYGYVFVGCLVAMFLYVFFF) threads the bilayer. At 509–567 (LPETIGLSLEEIQLLYEEGIKPWKSASWVPPSRRGASSRETEAKKKSWKEVLKFPKSFN) the chain is on the cytoplasmic side. Residues 533-555 (SASWVPPSRRGASSRETEAKKKS) form a disordered region. Basic and acidic residues predominate over residues 545 to 555 (SSRETEAKKKS).

This sequence belongs to the major facilitator superfamily. Sugar transporter (TC 2.A.1.1) family.

Its subcellular location is the membrane. Its function is as follows. Probable glucose transporter. This is Hexose transporter HXT15 (HXT15) from Saccharomyces cerevisiae (strain ATCC 204508 / S288c) (Baker's yeast).